Reading from the N-terminus, the 568-residue chain is Proline--tRNA ligase (568 aa).

Belongs to the class-II aminoacyl-tRNA synthetase family. ProS type 1 subfamily. As to quaternary structure, homodimer.

It localises to the cytoplasm. The catalysed reaction is tRNA(Pro) + L-proline + ATP = L-prolyl-tRNA(Pro) + AMP + diphosphate. Catalyzes the attachment of proline to tRNA(Pro) in a two-step reaction: proline is first activated by ATP to form Pro-AMP and then transferred to the acceptor end of tRNA(Pro). As ProRS can inadvertently accommodate and process non-cognate amino acids such as alanine and cysteine, to avoid such errors it has two additional distinct editing activities against alanine. One activity is designated as 'pretransfer' editing and involves the tRNA(Pro)-independent hydrolysis of activated Ala-AMP. The other activity is designated 'posttransfer' editing and involves deacylation of mischarged Ala-tRNA(Pro). The misacylated Cys-tRNA(Pro) is not edited by ProRS. The sequence is that of Proline--tRNA ligase from Lysinibacillus sphaericus (strain C3-41).